The sequence spans 466 residues: Delta-1 crystallin (466 aa).

Belongs to the lyase 1 family. Argininosuccinate lyase subfamily. As to quaternary structure, homotetramer. Eye lens.

Its function is as follows. Delta crystallin, the principal crystallin in embryonic lens, is found only in birds and reptiles. Despite possessing the necessary catalytic residues, this protein does not function as an enzymatically active argininosuccinate lyase. The polypeptide is Delta-1 crystallin (ASL1) (Anas platyrhynchos (Mallard)).